Here is a 188-residue protein sequence, read N- to C-terminus: dTTP/UTP pyrophosphatase (188 aa).

Catalysis depends on D70, which acts as the Proton acceptor.

Belongs to the Maf family. YhdE subfamily. A divalent metal cation is required as a cofactor.

Its subcellular location is the cytoplasm. It carries out the reaction dTTP + H2O = dTMP + diphosphate + H(+). The enzyme catalyses UTP + H2O = UMP + diphosphate + H(+). Functionally, nucleoside triphosphate pyrophosphatase that hydrolyzes dTTP and UTP. May have a dual role in cell division arrest and in preventing the incorporation of modified nucleotides into cellular nucleic acids. This chain is dTTP/UTP pyrophosphatase, found in Clostridium botulinum (strain Alaska E43 / Type E3).